A 510-amino-acid chain; its full sequence is Secreted RxLR effector protein 108 (510 aa).

The signal sequence occupies residues methionine 1–alanine 20. An N-linked (GlcNAc...) asparagine glycan is attached at asparagine 47. The short motif at arginine 48–arginine 65 is the RxLR-dEER element. Disordered stretches follow at residues arginine 111 to threonine 139 and lysine 386 to lysine 442. Basic residues predominate over residues proline 122–lysine 137. A compositionally biased stretch (polar residues) spans aspartate 393–glutamine 405. Basic and acidic residues predominate over residues valine 429–lysine 442.

This sequence belongs to the RxLR effector family.

The protein resides in the secreted. It localises to the host nucleus. Functionally, secreted effector that completely suppresses the host cell death induced by cell death-inducing proteins. This Plasmopara viticola (Downy mildew of grapevine) protein is Secreted RxLR effector protein 108.